Consider the following 106-residue polypeptide: Nucleoid-associated protein MCCL_1934 (106 aa).

A disordered region spans residues Met-1–Glu-34. Residues Met-7–Lys-16 show a composition bias toward low complexity. Residues Lys-20–Glu-34 show a composition bias toward basic and acidic residues.

Belongs to the YbaB/EbfC family. Homodimer.

The protein resides in the cytoplasm. Its subcellular location is the nucleoid. In terms of biological role, binds to DNA and alters its conformation. May be involved in regulation of gene expression, nucleoid organization and DNA protection. This is Nucleoid-associated protein MCCL_1934 from Macrococcus caseolyticus (strain JCSC5402) (Macrococcoides caseolyticum).